A 249-amino-acid chain; its full sequence is Eukaryotic translation initiation factor 6 (249 aa).

The protein belongs to the eIF-6 family. As to quaternary structure, monomer. Associates with the 60S ribosomal subunit.

The protein localises to the cytoplasm. It is found in the nucleus. The protein resides in the nucleolus. Functionally, binds to the 60S ribosomal subunit and prevents its association with the 40S ribosomal subunit to form the 80S initiation complex in the cytoplasm. May also be involved in ribosome biogenesis. The protein is Eukaryotic translation initiation factor 6 of Babesia bovis.